A 172-amino-acid chain; its full sequence is Large ribosomal subunit protein uL10 (172 aa).

This sequence belongs to the universal ribosomal protein uL10 family. As to quaternary structure, part of the ribosomal stalk of the 50S ribosomal subunit. The N-terminus interacts with L11 and the large rRNA to form the base of the stalk. The C-terminus forms an elongated spine to which L12 dimers bind in a sequential fashion forming a multimeric L10(L12)X complex.

Forms part of the ribosomal stalk, playing a central role in the interaction of the ribosome with GTP-bound translation factors. In Rhodopseudomonas palustris (strain BisB5), this protein is Large ribosomal subunit protein uL10.